The sequence spans 196 residues: HTH-type transcriptional regulator EcpR (196 aa).

Positions 138 to 196 (KDIKKDKITDREMEIIRMTAQGMQPKSIARIENCSVKTVYTHRRNAEAKLYSKIYKLVQ) constitute an HTH luxR-type domain. The segment at residues 162–181 (PKSIARIENCSVKTVYTHRR) is a DNA-binding region (H-T-H motif).

It belongs to the EcpR/MatA family.

The protein resides in the cytoplasm. Part of the ecpRABCDE operon, which encodes the E.coli common pilus (ECP). ECP is found in both commensal and pathogenic strains and plays a dual role in early-stage biofilm development and host cell recognition. Positively regulates the expression of the ecp operon. This chain is HTH-type transcriptional regulator EcpR (ecpR), found in Escherichia coli (strain K12 / DH10B).